A 441-amino-acid chain; its full sequence is Methylenetetrahydrofolate--tRNA-(uracil-5-)-methyltransferase TrmFO (441 aa).

11–16 provides a ligand contact to FAD; the sequence is GGGLAG.

This sequence belongs to the MnmG family. TrmFO subfamily. FAD serves as cofactor.

Its subcellular location is the cytoplasm. The enzyme catalyses uridine(54) in tRNA + (6R)-5,10-methylene-5,6,7,8-tetrahydrofolate + NADH + H(+) = 5-methyluridine(54) in tRNA + (6S)-5,6,7,8-tetrahydrofolate + NAD(+). It catalyses the reaction uridine(54) in tRNA + (6R)-5,10-methylene-5,6,7,8-tetrahydrofolate + NADPH + H(+) = 5-methyluridine(54) in tRNA + (6S)-5,6,7,8-tetrahydrofolate + NADP(+). In terms of biological role, catalyzes the folate-dependent formation of 5-methyl-uridine at position 54 (M-5-U54) in all tRNAs. This chain is Methylenetetrahydrofolate--tRNA-(uracil-5-)-methyltransferase TrmFO, found in Syntrophus aciditrophicus (strain SB).